Reading from the N-terminus, the 453-residue chain is GTPase Der (453 aa).

EngA-type G domains follow at residues 4-169 and 178-353; these read PIVA…PPAD and IGVA…EQHR. GTP is bound by residues 10–17, 57–61, 120–123, 184–191, 231–235, and 296–299; these read GRPNVGKS, DTGGL, NKCE, DTAGI, and NKWD. A KH-like domain is found at 354 to 439; sequence RRVGTSVINE…PIRLFWRGKK (86 aa).

This sequence belongs to the TRAFAC class TrmE-Era-EngA-EngB-Septin-like GTPase superfamily. EngA (Der) GTPase family. As to quaternary structure, associates with the 50S ribosomal subunit.

Its function is as follows. GTPase that plays an essential role in the late steps of ribosome biogenesis. This Synechococcus sp. (strain ATCC 27144 / PCC 6301 / SAUG 1402/1) (Anacystis nidulans) protein is GTPase Der.